An 86-amino-acid polypeptide reads, in one-letter code: Small ribosomal subunit protein bS20 (86 aa).

This sequence belongs to the bacterial ribosomal protein bS20 family.

Functionally, binds directly to 16S ribosomal RNA. The polypeptide is Small ribosomal subunit protein bS20 (Pelagibacter ubique (strain HTCC1062)).